The following is an 86-amino-acid chain: Large ribosomal subunit protein bL27 (86 aa).

Residues Met1–Gly22 form a disordered region.

The protein belongs to the bacterial ribosomal protein bL27 family.

This chain is Large ribosomal subunit protein bL27, found in Rickettsia peacockii (strain Rustic).